We begin with the raw amino-acid sequence, 41 residues long: NCIGEQVPCDENDPRCCSGLVVLKKTLHGIWIKSSYCYKCK.

3 disulfide bridges follow: C2–C16, C9–C37, and C17–C40.

The protein belongs to the neurotoxin 14 (magi-1) family. 01 (HNTX-16) subfamily. As to expression, expressed by the venom gland.

The protein localises to the secreted. Its function is as follows. Intracerebroventricular injection paralyzes mice. Has no effect on voltage-gated sodium currents. This Cyriopagopus schmidti (Chinese bird spider) protein is U3-theraphotoxin-Hs1a.